A 248-amino-acid polypeptide reads, in one-letter code: Meiotically up-regulated gene 110 protein (248 aa).

The helical transmembrane segment at 23–43 threads the bilayer; sequence LRFVFWFSVLIPIFFIALIII.

Its subcellular location is the membrane. Has a role in meiosis. This is Meiotically up-regulated gene 110 protein (mug110) from Schizosaccharomyces pombe (strain 972 / ATCC 24843) (Fission yeast).